The sequence spans 395 residues: MDVSKVLILTLIWLLTADSAPPDYVTLTRKMESKILRVMGLSERPRPKPNATAPQYMWDLYRQQMAATEGAAASRGGETEIGKEEEEDGRPCSETKLSSNIIRSVSHTGGDLRASNSTSLQQILLFDVASIPHAETIEAADLRLEIPALPSATDVPSLAVRIYQLESRTRLNSIVSLKDKRLRLLDVVLADLSQGYAGTIDILSTVNSWRSKKTSNHGLLLHVELMSTSGNNRRGSQVIKELGAISKKCTANLIVTSSEYRQCSKRNRRNKRQAESEAPADISSFPTASLTNLCQRHRLFVSFRDVGWENWIIAPMGYQAYYCDGECPFPLGERLNGTNHAIIQTLVNSIDNRAVPKVCCAPTKLSGISMLYFDNNENVVLRQYEDMVVEACGCR.

The signal sequence occupies residues 1-19; the sequence is MDVSKVLILTLIWLLTADS. Residues 20 to 272 constitute a propeptide that is removed on maturation; sequence APPDYVTLTR…CSKRNRRNKR (253 aa). A glycan (N-linked (GlcNAc...) asparagine) is linked at asparagine 50. Residues 69-97 are disordered; it reads EGAAASRGGETEIGKEEEEDGRPCSETKL. N-linked (GlcNAc...) asparagine glycans are attached at residues asparagine 116 and asparagine 336. 3 cysteine pairs are disulfide-bonded: cysteine 294–cysteine 360, cysteine 323–cysteine 392, and cysteine 327–cysteine 394.

Belongs to the TGF-beta family. As to quaternary structure, homodimer; disulfide-linked.

It is found in the secreted. Could have a critical role in early developmental decisions in the sea urchin embryo. In Strongylocentrotus purpuratus (Purple sea urchin), this protein is Univin.